Consider the following 1281-residue polypeptide: Enterobactin synthase component F (1281 aa).

The interval 1 to 301 is elongation/condensation; the sequence is MSQHLPLVAA…NVLPLGIHIA (301 aa). Positions 486–891 are adenylation; the sequence is SYREMHEQVV…ALPDVKQAVT (406 aa). Residues 975 to 1050 enclose the Carrier domain; it reads APKAGSETII…KLATIIDGEE (76 aa). S1010 carries the post-translational modification O-(pantetheine 4'-phosphoryl)serine. Residues 1070–1281 form a thioesterase region; sequence PTLFCFHPAS…GPIIRATLNR (212 aa). H1259 functions as the Proton acceptor; for thioesterase activity in the catalytic mechanism.

It belongs to the ATP-dependent AMP-binding enzyme family. EntF subfamily. Proteins EntB, EntD, EntE and EntF are the component of the enterobactin synthase. Components probably do not form a stable complex. EntF acts as a catalytic monomer. Pantetheine 4'-phosphate serves as cofactor. Post-translationally, 4'-phosphopantetheine is transferred from CoA to a specific serine of apo-EntF by EntD. Holo-EntF so formed is then acylated with seryl-AMP.

The protein localises to the cytoplasm. The catalysed reaction is 3 2,3-dihydroxybenzoate + 3 L-serine + 6 ATP = enterobactin + 6 AMP + 6 diphosphate + 4 H(+). The enzyme catalyses holo-[peptidyl-carrier protein] + L-serine + ATP = L-seryl-[peptidyl-carrier protein] + AMP + diphosphate. Its pathway is siderophore biosynthesis; enterobactin biosynthesis. Involved in the biosynthesis of the siderophore enterobactin (enterochelin), which is a macrocyclic trimeric lactone of N-(2,3-dihydroxybenzoyl)-serine. EntF catalyzes the activation of L-serine via ATP-dependent PPi exchange reaction to form seryladenylate. Activated L-serine is loaded onto the peptidyl carrier domain via a thioester linkage to the phosphopanthetheine moiety, forming seryl-S-Ppant-EntF. EntF acts then as the sole catalyst for the formation of the three amide and three ester linkages found in enterobactin, using seryladenylate and 2,3-dihydroxybenzoate-S-Ppant-EntB (DHB-S-Ppant-EntB) as substrates, via the formation of a DHB-Ser-S-Ppant-EntF intermediate. This Shigella flexneri protein is Enterobactin synthase component F (entF).